Reading from the N-terminus, the 363-residue chain is 3-dehydroquinate synthase (363 aa).

NAD(+) contacts are provided by residues aspartate 75–lysine 80, glycine 109–aspartate 113, threonine 133–serine 134, lysine 146, lysine 155, and threonine 173–threonine 176. Zn(2+) is bound by residues glutamate 188, histidine 251, and histidine 267.

This sequence belongs to the sugar phosphate cyclases superfamily. Dehydroquinate synthase family. Requires Co(2+) as cofactor. Zn(2+) is required as a cofactor. The cofactor is NAD(+).

Its subcellular location is the cytoplasm. The enzyme catalyses 7-phospho-2-dehydro-3-deoxy-D-arabino-heptonate = 3-dehydroquinate + phosphate. It functions in the pathway metabolic intermediate biosynthesis; chorismate biosynthesis; chorismate from D-erythrose 4-phosphate and phosphoenolpyruvate: step 2/7. Catalyzes the conversion of 3-deoxy-D-arabino-heptulosonate 7-phosphate (DAHP) to dehydroquinate (DHQ). The polypeptide is 3-dehydroquinate synthase (Arthrobacter sp. (strain FB24)).